The following is a 215-amino-acid chain: Histone-like protein 18C (215 aa).

A disordered region spans residues 140 to 215; it reads CTPRKENKCS…PKSSKPKCSM (76 aa). Composition is skewed to basic residues over residues 149–190 and 197–215; these read SKPR…RPRK and AKAK…KCSM.

Functionally, not known. Encoded in the intron of cAMP-dependent protein kinase regulatory chain type I. This chain is Histone-like protein 18C (Mst77F), found in Drosophila melanogaster (Fruit fly).